We begin with the raw amino-acid sequence, 118 residues long: Large ribosomal subunit protein bL17 (118 aa).

The protein belongs to the bacterial ribosomal protein bL17 family. In terms of assembly, part of the 50S ribosomal subunit. Contacts protein L32.

This is Large ribosomal subunit protein bL17 from Phytoplasma mali (strain AT).